We begin with the raw amino-acid sequence, 365 residues long: Cobalt-precorrin-5B C(1)-methyltransferase (365 aa).

Belongs to the CbiD family.

It carries out the reaction Co-precorrin-5B + S-adenosyl-L-methionine = Co-precorrin-6A + S-adenosyl-L-homocysteine. The protein operates within cofactor biosynthesis; adenosylcobalamin biosynthesis; cob(II)yrinate a,c-diamide from sirohydrochlorin (anaerobic route): step 6/10. Its function is as follows. Catalyzes the methylation of C-1 in cobalt-precorrin-5B to form cobalt-precorrin-6A. This Paraburkholderia phytofirmans (strain DSM 17436 / LMG 22146 / PsJN) (Burkholderia phytofirmans) protein is Cobalt-precorrin-5B C(1)-methyltransferase.